We begin with the raw amino-acid sequence, 341 residues long: Acetylpolyamine amidohydrolase (341 aa).

Catalysis depends on His-157, which acts as the Proton donor/acceptor. 3 residues coordinate Zn(2+): Asp-192, His-194, and Asp-281.

The protein belongs to the histone deacetylase family. Homodimer. It depends on Zn(2+) as a cofactor.

It catalyses the reaction N-acetylputrescine + H2O = putrescine + acetate. The catalysed reaction is N-acetylcadaverine + H2O = cadaverine + acetate. The protein operates within amine and polyamine metabolism. In terms of biological role, involved in polyamine metabolism. Catalyzes the deacetylation of various acetylated polyamines such as N-acetylputrescine and N-acetylcadaverine. In Burkholderia pseudomallei (strain 1710b), this protein is Acetylpolyamine amidohydrolase.